Reading from the N-terminus, the 288-residue chain is Transmembrane protein 163 (288 aa).

The interval 1–64 (MEPALGSERR…ESGQFSDGLE (64 aa)) is disordered. Residues 1–87 (MEPALGSERR…HEAQNYRKKA (87 aa)) lie on the Cytoplasmic side of the membrane. S11 is modified (phosphoserine). The span at 12–24 (PPGPGVPRPPPRG) shows a compositional bias: pro residues. Over residues 25-42 (HAPSTAAPAPSPAPMSSS) the composition is skewed to low complexity. Residues 41–71 (SSVQSDEERQPRISESGQFSDGLEDRGLLES) are required for interaction with MCOLN1. 4 positions are modified to phosphoserine: S45, S54, S56, and S60. The chain crosses the membrane as a helical span at residues 88 to 108 (LWVSWLSIIVTLALAVAAFTV). Residues 109-115 (SVMRYSA) are Extracellular-facing. The helical transmembrane segment at 116-136 (SAFGFAFDAILDVLSSAIVLW) threads the bilayer. Residues 137-149 (RYSNAAAVHSANR) are Cytoplasmic-facing. The chain crosses the membrane as a helical span at residues 150–170 (EYIACVILGVIFLLSSICIVV). Residues 171–186 (KAIHDLSTRLLPEVDD) are Extracellular-facing. The chain crosses the membrane as a helical span at residues 187–207 (FLFSVSILSGILCSVLAVLKF). Residues 208–216 (MLGKVLTSR) are Cytoplasmic-facing. A helical transmembrane segment spans residues 217–237 (ALITDGFNSLVGGVMGFSILL). The Extracellular segment spans residues 238–254 (SAEVFKHNAAVWYLDGS). Residues 255-275 (IGVLIGLTIFAYGVKLLIDMV) form a helical membrane-spanning segment. Over 276–288 (PRVRQTRHYEMFE) the chain is Cytoplasmic.

Belongs to the TMEM163 family. As to quaternary structure, homodimer. Interacts with MCOLN1. Interacts with SLC30A1, SLC30A2, SLC30A3 and SLC30A4. Widely expressed, with high expression in the brain, cerebellum, heart, lung and spleen. In the brain, mainly expressed in the glutaminergic neuron subpopulations.

Its subcellular location is the cytoplasmic vesicle. It is found in the secretory vesicle. It localises to the synaptic vesicle membrane. The protein localises to the early endosome membrane. The protein resides in the late endosome membrane. Its subcellular location is the lysosome membrane. It is found in the cell membrane. The enzyme catalyses Zn(2+)(in) = Zn(2+)(out). Zinc ion transporter that mediates zinc efflux and plays a crucial role in intracellular zinc homeostasis. Binds the divalent cations Zn(2+), Ni(2+), and to a minor extent Cu(2+). Is a functional modulator of P2X purinoceptors, including P2RX1, P2RX3, P2RX4 and P2RX7. Plays a role in central nervous system development and is required for myelination, and survival and proliferation of oligodendrocytes. The chain is Transmembrane protein 163 (Tmem163) from Mus musculus (Mouse).